A 176-amino-acid polypeptide reads, in one-letter code: Crossover junction endodeoxyribonuclease RuvC (176 aa).

Active-site residues include Asp-8, Glu-69, and Asp-141. Positions 8, 69, and 141 each coordinate Mg(2+).

The protein belongs to the RuvC family. Homodimer which binds Holliday junction (HJ) DNA. The HJ becomes 2-fold symmetrical on binding to RuvC with unstacked arms; it has a different conformation from HJ DNA in complex with RuvA. In the full resolvosome a probable DNA-RuvA(4)-RuvB(12)-RuvC(2) complex forms which resolves the HJ. It depends on Mg(2+) as a cofactor.

The protein localises to the cytoplasm. The enzyme catalyses Endonucleolytic cleavage at a junction such as a reciprocal single-stranded crossover between two homologous DNA duplexes (Holliday junction).. Its function is as follows. The RuvA-RuvB-RuvC complex processes Holliday junction (HJ) DNA during genetic recombination and DNA repair. Endonuclease that resolves HJ intermediates. Cleaves cruciform DNA by making single-stranded nicks across the HJ at symmetrical positions within the homologous arms, yielding a 5'-phosphate and a 3'-hydroxyl group; requires a central core of homology in the junction. The consensus cleavage sequence is 5'-(A/T)TT(C/G)-3'. Cleavage occurs on the 3'-side of the TT dinucleotide at the point of strand exchange. HJ branch migration catalyzed by RuvA-RuvB allows RuvC to scan DNA until it finds its consensus sequence, where it cleaves and resolves the cruciform DNA. The chain is Crossover junction endodeoxyribonuclease RuvC from Pseudomonas syringae pv. tomato (strain ATCC BAA-871 / DC3000).